Consider the following 138-residue polypeptide: Translation initiation factor 2 subunit beta (138 aa).

This sequence belongs to the eIF-2-beta/eIF-5 family. In terms of assembly, heterotrimer composed of an alpha, a beta and a gamma chain.

Its function is as follows. eIF-2 functions in the early steps of protein synthesis by forming a ternary complex with GTP and initiator tRNA. The protein is Translation initiation factor 2 subunit beta of Methanococcus maripaludis (strain C6 / ATCC BAA-1332).